Consider the following 350-residue polypeptide: Phosphotriesterase-related protein (350 aa).

The a divalent metal cation site is built by His22, His24, Glu169, His201, His230, and Asp298.

Belongs to the metallo-dependent hydrolases superfamily. Phosphotriesterase family. The cofactor is a divalent metal cation.

The protein is Phosphotriesterase-related protein of Drosophila sechellia (Fruit fly).